The primary structure comprises 165 residues: Nucleotide-binding protein P9211_04811 (165 aa).

This sequence belongs to the YajQ family.

Its function is as follows. Nucleotide-binding protein. The polypeptide is Nucleotide-binding protein P9211_04811 (Prochlorococcus marinus (strain MIT 9211)).